The primary structure comprises 263 residues: 7beta-hydroxysteroid dehydrogenase (263 aa).

Residues 17–21 (TEGVG), 40–41 (RR), and 66–67 (DF) each bind NADP(+). Tyr-156 functions as the Proton acceptor in the catalytic mechanism. NADP(+) is bound at residue Ser-240.

The protein belongs to the short-chain dehydrogenases/reductases (SDR) family.

It carries out the reaction a 7beta-hydroxysteroid + NADP(+) = a 7-oxosteroid + NADPH + H(+). The catalysed reaction is 7-oxolithocholate + NADPH + H(+) = ursodeoxycholate + NADP(+). Its function is as follows. 7beta-hydroxysteroid dehydrogenase that catalyzes the reduction of the 7-oxo group of 7-oxo-lithocholate (7-oxo-LCA), to yield ursodeoxycholate (UDCA). As R.gnavus is a common core bacterium of the human gut microbiota, this enzyme contributes to the formation of UDCA in the human colon. UDCA is regarded as a chemopreventive beneficial secondary bile acid due to its low hydrophobicity; it protects hepatocytes and bile duct epithelial cells against necrosis and apoptosis induced by more hydrophobic secondary bile acids like deoxycholate (DCA). This enzyme is also able to catalyze the reverse reaction in vitro, i.e. the oxidation of the 7beta-hydroxy group of UDCA to 7-oxo-LCA, but much less efficiently than the reduction reaction. This Mediterraneibacter gnavus (strain ATCC 29149 / DSM 114966 / JCM 6515 / VPI C7-9) (Ruminococcus gnavus) protein is 7beta-hydroxysteroid dehydrogenase.